Here is a 174-residue protein sequence, read N- to C-terminus: Ribosome maturation factor RimM (174 aa).

The region spanning 98-172 (AGEYYYHQIV…VVTVELMEGL (75 aa)) is the PRC barrel domain.

Belongs to the RimM family. Binds ribosomal protein uS19.

The protein localises to the cytoplasm. An accessory protein needed during the final step in the assembly of 30S ribosomal subunit, possibly for assembly of the head region. Essential for efficient processing of 16S rRNA. May be needed both before and after RbfA during the maturation of 16S rRNA. It has affinity for free ribosomal 30S subunits but not for 70S ribosomes. The sequence is that of Ribosome maturation factor RimM from Lactiplantibacillus plantarum (strain ATCC BAA-793 / NCIMB 8826 / WCFS1) (Lactobacillus plantarum).